Here is a 623-residue protein sequence, read N- to C-terminus: Chaperone protein DnaK (623 aa).

Phosphothreonine; by autocatalysis is present on Thr174. Disordered regions lie at residues 470–504 (ITIK…KEEV) and 578–623 (GGAQ…DPDK). Basic and acidic residues predominate over residues 481-504 (EEIKKMQKDAEEHAEEDKKRKEEV). A compositionally biased stretch (low complexity) spans 578–604 (GGAQGAAGQAGPQGAQGGQPNNDNGSS). Basic and acidic residues predominate over residues 614–623 (GDFHKVDPDK).

Belongs to the heat shock protein 70 family.

In terms of biological role, acts as a chaperone. The sequence is that of Chaperone protein DnaK from Lactobacillus gasseri (strain ATCC 33323 / DSM 20243 / BCRC 14619 / CIP 102991 / JCM 1131 / KCTC 3163 / NCIMB 11718 / NCTC 13722 / AM63).